We begin with the raw amino-acid sequence, 344 residues long: Cathepsin B-like cysteine proteinase 5 (344 aa).

Positions M1 to A15 are cleaved as a signal peptide. Positions V16–A81 are excised as a propeptide. 6 disulfide bridges follow: C95-C124, C107-C154, C143-C213, C144-C150, C183-C217, and C191-C203. Residue C110 is part of the active site. Active-site residues include H286 and N306.

Belongs to the peptidase C1 family.

This is Cathepsin B-like cysteine proteinase 5 (cpr-5) from Caenorhabditis elegans.